Consider the following 354-residue polypeptide: Homer protein homolog 1 (354 aa).

The WH1 domain maps to 1-110 (MGEQPIFSTR…EKFQEFKEAA (110 aa)). The residue at position 2 (Gly-2) is an N-acetylglycine. Positions 114–173 (KEKSQEKMELTSTPSQESAGGDLQSPLTPESINGTDDERTPDVTQNSEPRAEPTQNALPF) are disordered. 2 stretches are compositionally biased toward polar residues: residues 138–147 (SPLTPESING) and 155–173 (DVTQ…ALPF). Residues 181-352 (KHWEAELATL…LRDNLAKLLE (172 aa)) are a coiled coil. A required for tetramerization region spans residues 290 to 354 (KLQEVEIRNK…DNLAKLLECS (65 aa)). Ser-306 is modified (phosphoserine).

The protein belongs to the Homer family. As to quaternary structure, tetramer; this tetrameric structure is critical for forming the high-order complex with SHANK1, which in turn is necessary for the structural and functional integrity of dendritic spines. Interacts with GRM1, GRM5, ITPR1, DNM3, RYR1, RYR2 and SHANK3. Interacts with IFT57 and OPHN1. Isoform 1 encodes a coiled-coil structure that mediates homo- and heteromultimerization. Interacts with SHANK1; forms high-order polymerized complex with a mesh-like network structure, at least composed of SHANK1, HOMER1 and DLGAP1; the complex formation is SHANK1 multimerization dependent. Interacts with NFATC4. Interacts with DAGLA (via PPXXF motif); this interaction is required for the cell membrane localization of DAGLA. Interacts with SRGAP2.

It localises to the cytoplasm. The protein resides in the postsynaptic density. It is found in the synapse. The protein localises to the cell projection. Its subcellular location is the dendritic spine. Postsynaptic density scaffolding protein. Binds and cross-links cytoplasmic regions of GRM1, GRM5, ITPR1, DNM3, RYR1, RYR2, SHANK1 and SHANK3. By physically linking GRM1 and GRM5 with ER-associated ITPR1 receptors, it aids the coupling of surface receptors to intracellular calcium release. May also couple GRM1 to PI3 kinase through its interaction with AGAP2. Isoform 1 regulates the trafficking and surface expression of GRM5. Isoform 3 acts as a natural dominant negative, in dynamic competition with constitutively expressed isoform 1 to regulate synaptic metabotropic glutamate function. Isoform 3, may be involved in the structural changes that occur at synapses during long-lasting neuronal plasticity and development. Forms a high-order complex with SHANK1, which in turn is necessary for the structural and functional integrity of dendritic spines. Negatively regulates T cell activation by inhibiting the calcineurin-NFAT pathway. Acts by competing with calcineurin/PPP3CA for NFAT protein binding, hence preventing NFAT activation by PPP3CA. This is Homer protein homolog 1 from Homo sapiens (Human).